Here is a 597-residue protein sequence, read N- to C-terminus: Arginine--tRNA ligase (597 aa).

The span at 23–32 (QAAAARQASQ) shows a compositional bias: low complexity. The segment at 23–43 (QAAAARQASQPLDPQLAPASK) is disordered. A 'HIGH' region motif is present at residues 137–147 (PNIAKEMHVGH).

Belongs to the class-I aminoacyl-tRNA synthetase family. Monomer.

Its subcellular location is the cytoplasm. It catalyses the reaction tRNA(Arg) + L-arginine + ATP = L-arginyl-tRNA(Arg) + AMP + diphosphate. This Synechococcus sp. (strain WH7803) protein is Arginine--tRNA ligase.